The chain runs to 198 residues: Cytokinin riboside 5'-monophosphate phosphoribohydrolase (198 aa).

Substrate is bound by residues Glu91, 109–110 (RK), 126–132 (GVGTAEE), and Thr138.

The protein belongs to the LOG family.

The enzyme catalyses N(6)-(dimethylallyl)adenosine 5'-phosphate + H2O = N(6)-dimethylallyladenine + D-ribose 5-phosphate. It catalyses the reaction 9-ribosyl-trans-zeatin 5'-phosphate + H2O = trans-zeatin + D-ribose 5-phosphate. In terms of biological role, catalyzes the hydrolytic removal of ribose 5'-monophosphate from nitrogen N6-modified adenosines, the final step of bioactive cytokinin synthesis. The protein is Cytokinin riboside 5'-monophosphate phosphoribohydrolase (fas6) of Rhodococcoides fascians (Rhodococcus fascians).